The following is a 383-amino-acid chain: Probable arabinan endo-1,5-alpha-L-arabinosidase D (383 aa).

Positions 1–22 (MVHITLPGLLLCLCLYLSVAPA) are cleaved as a signal peptide. Aspartate 49 functions as the Proton acceptor in the catalytic mechanism. Asparagine 75, asparagine 163, and asparagine 206 each carry an N-linked (GlcNAc...) asparagine glycan. Residue glutamate 227 is the Proton donor of the active site. An N-linked (GlcNAc...) asparagine glycan is attached at asparagine 325. Asparagine 356 carries the GPI-anchor amidated asparagine lipid modification. Positions 357–383 (PGNSLQPPSSVSLQIVAFLCLVILFTL) are cleaved as a propeptide — removed in mature form.

Belongs to the glycosyl hydrolase 43 family.

The protein localises to the cell membrane. It catalyses the reaction Endohydrolysis of (1-&gt;5)-alpha-arabinofuranosidic linkages in (1-&gt;5)-arabinans.. Its pathway is glycan metabolism; L-arabinan degradation. In terms of biological role, endo-1,5-alpha-L-arabinanase involved in degradation of pectin. Its preferred substrate is linear 1,5-alpha-L-arabinan. The sequence is that of Probable arabinan endo-1,5-alpha-L-arabinosidase D (abnD) from Emericella nidulans (strain FGSC A4 / ATCC 38163 / CBS 112.46 / NRRL 194 / M139) (Aspergillus nidulans).